The following is a 560-amino-acid chain: Dihydroxy-acid dehydratase (560 aa).

Cysteine 50 contacts [2Fe-2S] cluster. Residue aspartate 82 participates in Mg(2+) binding. Residue cysteine 123 coordinates [2Fe-2S] cluster. Residues aspartate 124 and lysine 125 each contribute to the Mg(2+) site. Lysine 125 is subject to N6-carboxylysine. Cysteine 195 contributes to the [2Fe-2S] cluster binding site. Position 446 (glutamate 446) interacts with Mg(2+). Serine 472 (proton acceptor) is an active-site residue.

The protein belongs to the IlvD/Edd family. As to quaternary structure, homodimer. [2Fe-2S] cluster serves as cofactor. Mg(2+) is required as a cofactor.

It catalyses the reaction (2R)-2,3-dihydroxy-3-methylbutanoate = 3-methyl-2-oxobutanoate + H2O. The enzyme catalyses (2R,3R)-2,3-dihydroxy-3-methylpentanoate = (S)-3-methyl-2-oxopentanoate + H2O. It participates in amino-acid biosynthesis; L-isoleucine biosynthesis; L-isoleucine from 2-oxobutanoate: step 3/4. It functions in the pathway amino-acid biosynthesis; L-valine biosynthesis; L-valine from pyruvate: step 3/4. Functions in the biosynthesis of branched-chain amino acids. Catalyzes the dehydration of (2R,3R)-2,3-dihydroxy-3-methylpentanoate (2,3-dihydroxy-3-methylvalerate) into 2-oxo-3-methylpentanoate (2-oxo-3-methylvalerate) and of (2R)-2,3-dihydroxy-3-methylbutanoate (2,3-dihydroxyisovalerate) into 2-oxo-3-methylbutanoate (2-oxoisovalerate), the penultimate precursor to L-isoleucine and L-valine, respectively. This chain is Dihydroxy-acid dehydratase, found in Leptothrix cholodnii (strain ATCC 51168 / LMG 8142 / SP-6) (Leptothrix discophora (strain SP-6)).